Consider the following 288-residue polypeptide: Phytanoyl-CoA dioxygenase domain-containing protein 1 homolog (288 aa).

Residues K95, M134, 149–151 (HVD), and W167 each bind 2-oxoglutarate. Fe cation contacts are provided by H149 and D151. H242 contributes to the Fe cation binding site. 2 residues coordinate 2-oxoglutarate: S244 and R253.

This sequence belongs to the PhyH family. PHYHD1 subfamily. Fe cation serves as cofactor.

In terms of biological role, has alpha-ketoglutarate-dependent dioxygenase activity. Does not show detectable activity towards fatty acid CoA thioesters. Is not expected to be active with phytanoyl CoA. In Caenorhabditis elegans, this protein is Phytanoyl-CoA dioxygenase domain-containing protein 1 homolog.